Here is a 245-residue protein sequence, read N- to C-terminus: Uridylate kinase (245 aa).

An ATP-binding site is contributed by 20-23 (KLSG). Glycine 60 serves as a coordination point for UMP. Residues glycine 61 and arginine 65 each coordinate ATP. UMP-binding positions include aspartate 80 and 141 to 148 (AGLPYFST). ATP-binding residues include tyrosine 175 and aspartate 178.

Belongs to the UMP kinase family. As to quaternary structure, homohexamer.

It localises to the cytoplasm. The catalysed reaction is UMP + ATP = UDP + ADP. Its pathway is pyrimidine metabolism; CTP biosynthesis via de novo pathway; UDP from UMP (UMPK route): step 1/1. Inhibited by UTP. Its function is as follows. Catalyzes the reversible phosphorylation of UMP to UDP. The chain is Uridylate kinase from Paenarthrobacter aurescens (strain TC1).